The sequence spans 145 residues: MKALIQRVAKAQVTVAGEEVGAIGPGLLALVGIEPQDDRESIGRMLHRLLNYRVFADAEGRMNLSLAQLGGGLLLVSQFTLAADTRSGLRPSFSSAAPPAQGQALFEALLALARERHPQVAGGRFGAHMRVELVNDGPVTFLLEA.

A Gly-cisPro motif, important for rejection of L-amino acids motif is present at residues 137–138; the sequence is GP.

Belongs to the DTD family. As to quaternary structure, homodimer.

It localises to the cytoplasm. It catalyses the reaction glycyl-tRNA(Ala) + H2O = tRNA(Ala) + glycine + H(+). The enzyme catalyses a D-aminoacyl-tRNA + H2O = a tRNA + a D-alpha-amino acid + H(+). In terms of biological role, an aminoacyl-tRNA editing enzyme that deacylates mischarged D-aminoacyl-tRNAs. Also deacylates mischarged glycyl-tRNA(Ala), protecting cells against glycine mischarging by AlaRS. Acts via tRNA-based rather than protein-based catalysis; rejects L-amino acids rather than detecting D-amino acids in the active site. By recycling D-aminoacyl-tRNA to D-amino acids and free tRNA molecules, this enzyme counteracts the toxicity associated with the formation of D-aminoacyl-tRNA entities in vivo and helps enforce protein L-homochirality. The chain is D-aminoacyl-tRNA deacylase from Azotobacter vinelandii (strain DJ / ATCC BAA-1303).